A 612-amino-acid polypeptide reads, in one-letter code: Dihydroxy-acid dehydratase (612 aa).

D81 provides a ligand contact to Mg(2+). C122 contributes to the [2Fe-2S] cluster binding site. D123 and K124 together coordinate Mg(2+). Residue K124 is modified to N6-carboxylysine. C193 lines the [2Fe-2S] cluster pocket. A Mg(2+)-binding site is contributed by E489. The active-site Proton acceptor is the S515.

The protein belongs to the IlvD/Edd family. As to quaternary structure, homodimer. Requires [2Fe-2S] cluster as cofactor. Mg(2+) serves as cofactor.

It carries out the reaction (2R)-2,3-dihydroxy-3-methylbutanoate = 3-methyl-2-oxobutanoate + H2O. The catalysed reaction is (2R,3R)-2,3-dihydroxy-3-methylpentanoate = (S)-3-methyl-2-oxopentanoate + H2O. It participates in amino-acid biosynthesis; L-isoleucine biosynthesis; L-isoleucine from 2-oxobutanoate: step 3/4. It functions in the pathway amino-acid biosynthesis; L-valine biosynthesis; L-valine from pyruvate: step 3/4. In terms of biological role, functions in the biosynthesis of branched-chain amino acids. Catalyzes the dehydration of (2R,3R)-2,3-dihydroxy-3-methylpentanoate (2,3-dihydroxy-3-methylvalerate) into 2-oxo-3-methylpentanoate (2-oxo-3-methylvalerate) and of (2R)-2,3-dihydroxy-3-methylbutanoate (2,3-dihydroxyisovalerate) into 2-oxo-3-methylbutanoate (2-oxoisovalerate), the penultimate precursor to L-isoleucine and L-valine, respectively. The chain is Dihydroxy-acid dehydratase from Teredinibacter turnerae (strain ATCC 39867 / T7901).